The chain runs to 433 residues: MAQFYSAKRRTTTRQIITVSVNDLDSFGQGVARHNGKTLFIPGLLPQENAEVAVTEDKKQYARAKVVRRLSDSPERETPRCPHFGVCGGCQQQHASVDLQQRSKSAALARLMKHDVSEVIADVPWGYRRRARLSLNYLPKTQQLQMGFRKAGSSDIVDVKQCPILAPQLEALLPKVRACLGSLQAMRHLGHVELVQATSGTLMILRHTAPLSSADREKLERFSHSEGLDLYLAPDSEILETVSGEMPWYDSNGLRLTFSPRDFIQVNAGVNQKMVARALEWLDVQPEDRVLDLFCGMGNFTLPLATQAASVVGVEGVPALVEKGQQNARLNGLQNVTFYHENLEEDVTKQPWAKNGFDKVLLDPARAGAAGVMQQIIKLEPIRIVYVSCNPATLARDSEALLKAGYTIARLAMLDMFPHTGHLESMVLFSRVK.

A TRAM domain is found at 10 to 68; sequence RTTTRQIITVSVNDLDSFGQGVARHNGKTLFIPGLLPQENAEVAVTEDKKQYARAKVVR. [4Fe-4S] cluster-binding residues include Cys-81, Cys-87, Cys-90, and Cys-162. Residues Gln-265, Phe-294, Asn-299, Glu-315, Asn-342, and Asp-363 each contribute to the S-adenosyl-L-methionine site. Residue Cys-389 is the Nucleophile of the active site.

Belongs to the class I-like SAM-binding methyltransferase superfamily. RNA M5U methyltransferase family. RlmD subfamily.

It catalyses the reaction uridine(1939) in 23S rRNA + S-adenosyl-L-methionine = 5-methyluridine(1939) in 23S rRNA + S-adenosyl-L-homocysteine + H(+). Its function is as follows. Catalyzes the formation of 5-methyl-uridine at position 1939 (m5U1939) in 23S rRNA. In Shigella flexneri, this protein is 23S rRNA (uracil(1939)-C(5))-methyltransferase RlmD.